A 599-amino-acid polypeptide reads, in one-letter code: Leishmanolysin (599 aa).

The first 39 residues, 1–39 (MSVDSSSTHRHRSVAARLVRLAAAGAAVIAAVGTAAAWA), serve as a signal peptide directing secretion. Residues 40–97 (HAGAVQHRCIHDAMQARVRQSVARHHTAPGAVSAVGLPYVTLDTAAAADRRPGSAPTV) constitute a propeptide, activation peptide. Cystine bridges form between cysteine 122–cysteine 139 and cysteine 188–cysteine 227. Histidine 261 lines the Zn(2+) pocket. Glutamate 262 is a catalytic residue. Residue histidine 265 participates in Zn(2+) binding. Asparagine 297 is a glycosylation site (N-linked (GlcNAc...) asparagine). 7 cysteine pairs are disulfide-bonded: cysteine 311–cysteine 383, cysteine 390–cysteine 452, cysteine 403–cysteine 422, cysteine 412–cysteine 486, cysteine 463–cysteine 507, cysteine 512–cysteine 562, and cysteine 532–cysteine 555. Histidine 331 lines the Zn(2+) pocket. The N-linked (GlcNAc...) asparagine glycan is linked to asparagine 394. Asparagine 574 carries the GPI-anchor amidated asparagine lipid modification. Residues 575 to 599 (AAAGRRGPRAAATALLVAALLAVAL) constitute a propeptide, removed in mature form.

Belongs to the peptidase M8 family. Zn(2+) serves as cofactor.

Its subcellular location is the cell membrane. The catalysed reaction is Preference for hydrophobic residues at P1 and P1' and basic residues at P2' and P3'. A model nonapeptide is cleaved at -Ala-Tyr-|-Leu-Lys-Lys-.. Has an integral role during the infection of macrophages in the mammalian host. The protein is Leishmanolysin (gp63) of Leishmania chagasi.